A 210-amino-acid polypeptide reads, in one-letter code: Holliday junction branch migration complex subunit RuvA (210 aa).

The segment at 1-70 is domain I; it reads MISYLKGNPI…DEQPILYGFA (70 aa). The segment at 71-149 is domain II; sequence TAAERELFRQ…QWRKLVGITL (79 aa). Positions 150-160 are flexible linker; that stretch reads PSTSAIPSLEV. A domain III region spans residues 160–210; that stretch reads VLEDVEMTLLALGYTNEEINKAISTLSQDNQMLKNTNSEEWIREAIAWLSQ.

Belongs to the RuvA family. In terms of assembly, homotetramer. Forms an RuvA(8)-RuvB(12)-Holliday junction (HJ) complex. HJ DNA is sandwiched between 2 RuvA tetramers; dsDNA enters through RuvA and exits via RuvB. An RuvB hexamer assembles on each DNA strand where it exits the tetramer. Each RuvB hexamer is contacted by two RuvA subunits (via domain III) on 2 adjacent RuvB subunits; this complex drives branch migration. In the full resolvosome a probable DNA-RuvA(4)-RuvB(12)-RuvC(2) complex forms which resolves the HJ.

It localises to the cytoplasm. The RuvA-RuvB-RuvC complex processes Holliday junction (HJ) DNA during genetic recombination and DNA repair, while the RuvA-RuvB complex plays an important role in the rescue of blocked DNA replication forks via replication fork reversal (RFR). RuvA specifically binds to HJ cruciform DNA, conferring on it an open structure. The RuvB hexamer acts as an ATP-dependent pump, pulling dsDNA into and through the RuvAB complex. HJ branch migration allows RuvC to scan DNA until it finds its consensus sequence, where it cleaves and resolves the cruciform DNA. This chain is Holliday junction branch migration complex subunit RuvA, found in Rippkaea orientalis (strain PCC 8801 / RF-1) (Cyanothece sp. (strain PCC 8801)).